We begin with the raw amino-acid sequence, 108 residues long: Trissin (108 aa).

An N-terminal signal peptide occupies residues 1–29 (MTKTTMHWLAHFQIILLCIWLMCPPSSQA). 3 disulfide bridges follow: Cys32-Cys43, Cys35-Cys52, and Cys39-Cys51. Residues 57 to 108 (RKRSDPDALRQSSNRRLIDFILLQGRALFTQELRERRHNGTLMDLGLNTYYP) constitute a propeptide that is removed on maturation.

The protein localises to the secreted. Its function is as follows. Activates the G-protein coupled receptor TrissinR in vitro, leading to increased intracellular calcium ion levels. This chain is Trissin, found in Drosophila melanogaster (Fruit fly).